The chain runs to 1248 residues: ABC transporter B family member 7 (1248 aa).

6 helical membrane-spanning segments follow: residues 32 to 52, 82 to 102, 158 to 175, 179 to 201, 261 to 281, and 299 to 321; these read IVLM…QPFM, FLYL…CWMV, FTQL…AFIV, LTLA…TYIM, GLGI…AIWY, and VITS…NSFA. The 288-residue stretch at 35–322 folds into the ABC transmembrane type-1 1 domain; it reads MVIGTLSAMA…TLPSLNSFAA (288 aa). Residues 357-593 form the ABC transporter 1 domain; it reads IELRDVYFRY…PEGTYSQLVR (237 aa). ATP is bound at residue 392–399; the sequence is GQSGSGKS. N-linked (GlcNAc...) asparagine glycosylation is found at Asn-473 and Asn-652. Residues 682–702 traverse the membrane as a helical segment; it reads VLLLGSLAAVIHGIVFPVQGL. An ABC transmembrane type-1 2 domain is found at 683–970; the sequence is LLLGSLAAVI…TSTMAPDINK (288 aa). Asn-720 is a glycosylation site (N-linked (GlcNAc...) asparagine). Residues 722–742 traverse the membrane as a helical segment; that stretch reads SLFWALIFVALGLTDLIVIPL. Asn-779 carries an N-linked (GlcNAc...) asparagine glycan. Helical transmembrane passes span 813–833, 834–854, 914–934, and 939–959; these read IIGA…MALL, VAPV…GFGA, GSYL…SWLI, and ATFG…VGVT. Positions 1005-1242 constitute an ABC transporter 2 domain; that stretch reads IELQHVSFRY…SGGAYASLVA (238 aa). Residue 1040–1047 coordinates ATP; sequence GESGSGKS. N-linked (GlcNAc...) asparagine glycans are attached at residues Asn-1094, Asn-1193, and Asn-1244.

The protein belongs to the ABC transporter superfamily. ABCB family. Multidrug resistance exporter (TC 3.A.1.201) subfamily.

The protein resides in the membrane. The protein is ABC transporter B family member 7 (ABCB7) of Arabidopsis thaliana (Mouse-ear cress).